A 325-amino-acid polypeptide reads, in one-letter code: 8-oxo-dGDP phosphatase NUDT18 (325 aa).

One can recognise a Nudix hydrolase domain in the interval 38-163 (NVCYIVGAVI…DILSLIDAGL (126 aa)). Leucine 55 serves as a coordination point for Mg(2+). The Nudix box motif lies at 73-94 (GRMEECESILEALQREVREEAG).

It belongs to the Nudix hydrolase family. Mn(2+) serves as cofactor. Mg(2+) is required as a cofactor.

It carries out the reaction 8-oxo-dGDP + H2O = 8-oxo-dGMP + phosphate + H(+). The catalysed reaction is 8-oxo-dADP + H2O = 8-oxo-dAMP + phosphate + H(+). It catalyses the reaction 2-oxo-dADP + H2O = 2-oxo-dAMP + phosphate + H(+). The enzyme catalyses 8-oxo-GDP + H2O = 8-oxo-GMP + phosphate + H(+). Its function is as follows. Mediates the hydrolysis of oxidized nucleoside diphosphate derivatives. Hydrolyzes 8-oxo-7,8-dihydroguanine (8-oxo-Gua)-containing deoxyribo- and ribonucleoside diphosphates to the monophosphates. Hydrolyzes 8-oxo-dGDP and 8-oxo-GDP with the same efficiencies. Also hydrolyzes 8-OH-dADP and 2-OH-dADP. Exhibited no or minimal hydrolysis activity against 8-oxo-dGTP, 8-oxo-GTP, dGTP, GTP, dGDP and GDP. Probably removes oxidized guanine nucleotides from both the DNA and RNA precursor pools. The chain is 8-oxo-dGDP phosphatase NUDT18 (nudt18) from Danio rerio (Zebrafish).